We begin with the raw amino-acid sequence, 693 residues long: tRNA (guanine(27)-N(2))-dimethyltransferase (693 aa).

A Nucleolar localization signal motif is present at residues 95-99 (HKLRR). The segment at 144 to 166 (YHCIICSATITRRTDMLGHVRRH) adopts a C2H2-type zinc-finger fold. One can recognise a Trm1 methyltransferase domain in the interval 187–648 (EILKEADTDV…APLMQFKSIL (462 aa)). Positions 220, 267, 317, and 318 each coordinate S-adenosyl-L-methionine. Residues Cys-448, Cys-451, Cys-473, and Cys-475 each contribute to the Zn(2+) site. Residue Lys-545 forms a Glycyl lysine isopeptide (Lys-Gly) (interchain with G-Cter in SUMO2) linkage. Phosphoserine occurs at positions 572 and 667.

It belongs to the class I-like SAM-binding methyltransferase superfamily. Trm1 family.

The protein localises to the nucleus. The protein resides in the nucleolus. The catalysed reaction is guanosine(27) in tRNA(Tyr) + 2 S-adenosyl-L-methionine = N(2)-dimethylguanosine(27) in tRNA(Tyr) + 2 S-adenosyl-L-homocysteine + 2 H(+). Functionally, specifically dimethylates a single guanine residue at position 27 of tRNA(Tyr) using S-adenosyl-L-methionine as donor of the methyl groups. Dimethylation at position 27 of tRNA(Tyr) is required for efficient translation of tyrosine codons. Also required to maintain 3-(3-amino-3-carboxypropyl)uridine (acp3U) in the D-loop of several cytoplasmic tRNAs. In Macaca fascicularis (Crab-eating macaque), this protein is tRNA (guanine(27)-N(2))-dimethyltransferase (TRMT1L).